The primary structure comprises 352 residues: Spermidine/putrescine import ATP-binding protein PotA (352 aa).

An ABC transporter domain is found at I7–I237. An ATP-binding site is contributed by G39–T46.

This sequence belongs to the ABC transporter superfamily. Spermidine/putrescine importer (TC 3.A.1.11.1) family. In terms of assembly, the complex is composed of two ATP-binding proteins (PotA), two transmembrane proteins (PotB and PotC) and a solute-binding protein (PotD).

It localises to the cell membrane. The catalysed reaction is ATP + H2O + polyamine-[polyamine-binding protein]Side 1 = ADP + phosphate + polyamineSide 2 + [polyamine-binding protein]Side 1.. In terms of biological role, part of the ABC transporter complex PotABCD involved in spermidine/putrescine import. Responsible for energy coupling to the transport system. The chain is Spermidine/putrescine import ATP-binding protein PotA from Clostridium acetobutylicum (strain ATCC 824 / DSM 792 / JCM 1419 / IAM 19013 / LMG 5710 / NBRC 13948 / NRRL B-527 / VKM B-1787 / 2291 / W).